The primary structure comprises 400 residues: AA13 family lytic polysaccharide monooxygenase A (400 aa).

The first 17 residues, 1 to 17 (MLLTVLAVVGCFTAVNG), serve as a signal peptide directing secretion. Histidine 18 provides a ligand contact to Cu(2+). Histidine 18 is modified (methylhistidine). Residues 18–247 (HGYLTIPASR…AQVYLHCADI (230 aa)) enclose the Chitin-binding type-4 domain. Disulfide bonds link cysteine 39–cysteine 42, cysteine 65–cysteine 244, cysteine 101–cysteine 202, cysteine 117–cysteine 144, cysteine 152–cysteine 160, cysteine 166–cysteine 172, and cysteine 180–cysteine 191. Histidine 108 serves as a coordination point for Cu(2+). An N-linked (GlcNAc...) asparagine glycan is attached at asparagine 119. Tyrosine 241 contacts Cu(2+). The tract at residues 254–287 (GGTTSKSTTSTTSTTSTSRSTSTSAPTTTSSAST) is disordered. The segment covering 257 to 287 (TSKSTTSTTSTTSTSRSTSTSAPTTTSSAST) has biased composition (low complexity). The 108-residue stretch at 293 to 400 (TTQASLIPVT…TTATAAASWR (108 aa)) folds into the CBM20 domain. Residue asparagine 379 is glycosylated (N-linked (GlcNAc...) asparagine).

Belongs to the polysaccharide monooxygenase AA13 family. It depends on Cu(2+) as a cofactor. O-mannosylated.

Its subcellular location is the secreted. It catalyses the reaction starch + reduced acceptor + O2 = D-glucono-1,5-lactone-terminated malto-oligosaccharides + short-chain malto-oligosaccharides + acceptor + H2O.. Activity is inhibited by both beta-cyclodextrin or amylose that block the access to the active site. Its function is as follows. Starch-active lytic polysaccharide monooxygenase that oxidizes the C1 position of starch substrates. Catalysis by LPMOs requires the reduction of the active-site copper from Cu(II) to Cu(I) by a reducing agent and H(2)O(2) or O(2) as a cosubstrate. This Aspergillus terreus (strain NIH 2624 / FGSC A1156) protein is AA13 family lytic polysaccharide monooxygenase A.